A 480-amino-acid chain; its full sequence is Protein nucleotidyltransferase YdiU (480 aa).

8 residues coordinate ATP: Gly-84, Gly-86, Arg-87, Lys-107, Asp-119, Gly-120, Arg-170, and Arg-177. Catalysis depends on Asp-246, which acts as the Proton acceptor. Positions 247 and 256 each coordinate Mg(2+). ATP is bound at residue Asp-256.

This sequence belongs to the SELO family. It depends on Mg(2+) as a cofactor. Mn(2+) is required as a cofactor.

It catalyses the reaction L-seryl-[protein] + ATP = 3-O-(5'-adenylyl)-L-seryl-[protein] + diphosphate. The catalysed reaction is L-threonyl-[protein] + ATP = 3-O-(5'-adenylyl)-L-threonyl-[protein] + diphosphate. The enzyme catalyses L-tyrosyl-[protein] + ATP = O-(5'-adenylyl)-L-tyrosyl-[protein] + diphosphate. It carries out the reaction L-histidyl-[protein] + UTP = N(tele)-(5'-uridylyl)-L-histidyl-[protein] + diphosphate. It catalyses the reaction L-seryl-[protein] + UTP = O-(5'-uridylyl)-L-seryl-[protein] + diphosphate. The catalysed reaction is L-tyrosyl-[protein] + UTP = O-(5'-uridylyl)-L-tyrosyl-[protein] + diphosphate. In terms of biological role, nucleotidyltransferase involved in the post-translational modification of proteins. It can catalyze the addition of adenosine monophosphate (AMP) or uridine monophosphate (UMP) to a protein, resulting in modifications known as AMPylation and UMPylation. The polypeptide is Protein nucleotidyltransferase YdiU (Pseudoalteromonas atlantica (strain T6c / ATCC BAA-1087)).